The sequence spans 548 residues: MRVNYIFVTGGVVSSLGKGIATASLAAVLEARGLSVTIIKLDPYINMDPGTISPVQHGEVFITEDGAETDLDLGHYERFIRTKMRHHNNFTAGKIYADVLRKERRGDYLGATIQIIPHVTDTIKKWLIAGAFGHDVLLVEIGGTVGDIESLPFLEAIRQMVMEVNREQTLYIHLTLVPFIAVSGELKTKPTQHSVKELLSIGIQPDILICRSDRVISNSERKKISLFCNVPKQAIIALQDVDSIYKIPALLKDQGLDNYICKRFNLNCPEANLSDWEEVIYYQEHPIGEVTVGMVGKYIELVDAYKSVTEALKHAGIKNRFIVNIRLINSQDVEKLGIEKTLKGLDAILVPGGFGYRGVEGKILSAQYARENNIPYFGICLGMQVALIEFARHVAGMPEANSTEFVTNCKCPVIALITECKDENGIFITHNDNTNLGGTMRLGNQACYLIKGSLTHQIYGKSTILERHRHRYEVNNMLLKHITHAGLSCVGFSKKNNLVEVIEYPNHPWFIGSQFHPEFNSTPREGHPLFIGFIKAAIEYQHRHNKLI.

Residues 1-266 form an amidoligase domain region; sequence MRVNYIFVTG…DNYICKRFNL (266 aa). Serine 14 contributes to the CTP binding site. Residue serine 14 participates in UTP binding. Residues 15–20 and aspartate 72 contribute to the ATP site; that span reads SLGKGI. Residues aspartate 72 and glutamate 140 each coordinate Mg(2+). CTP-binding positions include 147 to 149, 187 to 192, and lysine 223; these read DIE and KTKPTQ. Residues 187–192 and lysine 223 contribute to the UTP site; that span reads KTKPTQ. One can recognise a Glutamine amidotransferase type-1 domain in the interval 291–543; it reads TVGMVGKYIE…IKAAIEYQHR (253 aa). Glycine 353 provides a ligand contact to L-glutamine. The active-site Nucleophile; for glutamine hydrolysis is cysteine 380. Residues 381 to 384, glutamate 404, and arginine 471 each bind L-glutamine; that span reads LGMQ. Residues histidine 516 and glutamate 518 contribute to the active site.

It belongs to the CTP synthase family. As to quaternary structure, homotetramer.

It carries out the reaction UTP + L-glutamine + ATP + H2O = CTP + L-glutamate + ADP + phosphate + 2 H(+). It catalyses the reaction L-glutamine + H2O = L-glutamate + NH4(+). The enzyme catalyses UTP + NH4(+) + ATP = CTP + ADP + phosphate + 2 H(+). Its pathway is pyrimidine metabolism; CTP biosynthesis via de novo pathway; CTP from UDP: step 2/2. Its activity is regulated as follows. Allosterically activated by GTP, when glutamine is the substrate; GTP has no effect on the reaction when ammonia is the substrate. The allosteric effector GTP functions by stabilizing the protein conformation that binds the tetrahedral intermediate(s) formed during glutamine hydrolysis. Inhibited by the product CTP, via allosteric rather than competitive inhibition. In terms of biological role, catalyzes the ATP-dependent amination of UTP to CTP with either L-glutamine or ammonia as the source of nitrogen. Regulates intracellular CTP levels through interactions with the four ribonucleotide triphosphates. This Blochmanniella pennsylvanica (strain BPEN) protein is CTP synthase.